The primary structure comprises 99 residues: Integration host factor subunit alpha (99 aa).

Positions 51–71 (NFDLRDKNQRPGRNPKTGEDI) are disordered.

Belongs to the bacterial histone-like protein family. As to quaternary structure, heterodimer of an alpha and a beta chain.

This protein is one of the two subunits of integration host factor, a specific DNA-binding protein that functions in genetic recombination as well as in transcriptional and translational control. The protein is Integration host factor subunit alpha (ihfA) of Dickeya dadantii (strain 3937) (Erwinia chrysanthemi (strain 3937)).